We begin with the raw amino-acid sequence, 437 residues long: 3-ketoacyl-CoA thiolase (437 aa).

Cys-99 serves as the catalytic Acyl-thioester intermediate. Residues His-392 and Cys-422 each act as proton acceptor in the active site.

This sequence belongs to the thiolase-like superfamily. Thiolase family. As to quaternary structure, heterotetramer of two alpha chains (FadJ) and two beta chains (FadI).

The protein resides in the cytoplasm. It carries out the reaction an acyl-CoA + acetyl-CoA = a 3-oxoacyl-CoA + CoA. Its pathway is lipid metabolism; fatty acid beta-oxidation. Its function is as follows. Catalyzes the final step of fatty acid oxidation in which acetyl-CoA is released and the CoA ester of a fatty acid two carbons shorter is formed. The chain is 3-ketoacyl-CoA thiolase from Erwinia tasmaniensis (strain DSM 17950 / CFBP 7177 / CIP 109463 / NCPPB 4357 / Et1/99).